A 73-amino-acid polypeptide reads, in one-letter code: UPF0435 protein lwe1727 (73 aa).

Belongs to the UPF0435 family.

This Listeria welshimeri serovar 6b (strain ATCC 35897 / DSM 20650 / CCUG 15529 / CIP 8149 / NCTC 11857 / SLCC 5334 / V8) protein is UPF0435 protein lwe1727.